Consider the following 438-residue polypeptide: Battenin (438 aa).

The disordered stretch occupies residues 1-25 (MGGCAGSRRRLSDSEGEETVPEPRL). The Cytoplasmic portion of the chain corresponds to 1–37 (MGGCAGSRRRLSDSEGEETVPEPRLPLLDHQGAHWKN). Phosphoserine is present on residues Ser12 and Ser14. Residues 38-58 (AVGFWLLGLCNNFSYVVMLSA) traverse the membrane as a helical segment. The Lumenal portion of the chain corresponds to 59–127 (AHDILSHERT…GLHLLPYSPR (69 aa)). N-linked (GlcNAc...) asparagine glycans are attached at residues Asn71 and Asn85. Residues 128–148 (VLVSGICAAGSFVLVAFSHSV) form a helical membrane-spanning segment. At 149 to 151 (GTS) the chain is on the cytoplasmic side. The chain crosses the membrane as a helical span at residues 152-172 (LCGVVLASISSGLGEVTFLSL). The Lumenal portion of the chain corresponds to 173–182 (TAFYPRAVIS). A helical transmembrane segment spans residues 183–203 (WWSSGTGGAGLLGALSYLGLT). Over 204–277 (QAGLSPQQTL…SLSLRERWTV (74 aa)) the chain is Cytoplasmic. Residues 237–268 (QDPGGEEEAESSARQPLIRTEAPESKPGSSSS) form a disordered region. The short motif at 242-244 (EEE) is the Lysosomal targeting motif element. The Lysosomal targeting motif. Required for AP1G1, AP2A2 and AP3D1 interaction motif lies at 253-254 (LI). Residues 278 to 298 (FKGLLWYIVPLVVVYFAEYFI) form a helical membrane-spanning segment. The Lumenal portion of the chain corresponds to 299–346 (NQGLFELLFFRNTSLSHAQQYRWYQMLYQAGVFASRSSLRCCHIRFTW). N-linked (GlcNAc...) asparagine glycosylation occurs at Asn310. The helical transmembrane segment at 347–367 (ALALLQCLNLAFLLADVWFGF) threads the bilayer. The Cytoplasmic portion of the chain corresponds to 368–438 (LLSIYFVFLI…PLHDFLCQLS (71 aa)). The short motif at 409 to 419 (MATTCISDTLG) is the Lysosomal targeting motif element. Cys435 bears the Cysteine methyl ester mark. Residue Cys435 is the site of S-farnesyl cysteine attachment. Positions 436–438 (QLS) are cleaved as a propeptide — removed in mature form.

It belongs to the battenin family. In terms of assembly, interacts with DCTN1, KIF3A, RAB7A and RILP. Interacts with CLN5. Post-translationally, highly glycosylated. In terms of processing, farnesylation is important for trafficking to lysosomes.

The protein resides in the lysosome membrane. Its subcellular location is the late endosome. The protein localises to the lysosome. Mediates microtubule-dependent, anterograde transport connecting the Golgi network, endosomes, autophagosomes, lysosomes and plasma membrane, and participates in several cellular processes such as regulation of lysosomal pH, lysosome protein degradation, receptor-mediated endocytosis, autophagy, transport of proteins and lipids from the TGN, apoptosis and synaptic transmission. Facilitates the proteins transport from trans-Golgi network (TGN)-to other membrane compartments such as transport of microdomain-associated proteins to the plasma membrane, IGF2R transport to the lysosome where it regulates the CTSD release leading to regulation of CTSD maturation and thereby APP intracellular processing. Moreover regulates CTSD activity in response to osmotic stress. Also binds galactosylceramide and transports it from the trans Golgi to the rafts, which may have immediate and downstream effects on cell survival by modulating ceramide synthesis. At the plasma membrane, regulates actin-dependent events including filopodia formation, cell migration, and pinocytosis through ARF1-CDC42 pathway and also the cytoskeleton organization through interaction with MYH10 and fodrin leading to the regulation of the plasma membrane association of Na+, K+ ATPase complex. Regulates synaptic transmission in the amygdala, hippocampus, and cerebellum through regulation of synaptic vesicles density and their proximity to active zones leading to modulation of short-term plasticity and age-dependent anxious behavior, learning and memory. Regulates autophagic vacuoles (AVs) maturation by modulating the trafficking between endocytic and autophagolysosomal/lysosomal compartments, which involves vesicle fusion leading to regulation of degradation process. Also participates in cellular homeostasis of compounds such as, water, ions, amino acids, proteins and lipids in several tissue namely in brain and kidney through regulation of their transport and synthesis. This Macaca fascicularis (Crab-eating macaque) protein is Battenin.